We begin with the raw amino-acid sequence, 359 residues long: 3-dehydroquinate synthase (359 aa).

NAD(+)-binding positions include 71 to 76 (DGEAYK), 105 to 109 (GVIGD), 129 to 130 (TT), K142, and K151. Residues E184, H247, and H264 each contribute to the Zn(2+) site.

Belongs to the sugar phosphate cyclases superfamily. Dehydroquinate synthase family. Co(2+) is required as a cofactor. The cofactor is Zn(2+). It depends on NAD(+) as a cofactor.

It localises to the cytoplasm. The catalysed reaction is 7-phospho-2-dehydro-3-deoxy-D-arabino-heptonate = 3-dehydroquinate + phosphate. The protein operates within metabolic intermediate biosynthesis; chorismate biosynthesis; chorismate from D-erythrose 4-phosphate and phosphoenolpyruvate: step 2/7. In terms of biological role, catalyzes the conversion of 3-deoxy-D-arabino-heptulosonate 7-phosphate (DAHP) to dehydroquinate (DHQ). The polypeptide is 3-dehydroquinate synthase (Burkholderia multivorans (strain ATCC 17616 / 249)).